We begin with the raw amino-acid sequence, 467 residues long: Cis-zeatin O-glucosyltransferase 1 (467 aa).

His21 acts as the Proton acceptor in catalysis. Residues His21 and Asn91 each coordinate an anthocyanidin. The active-site Charge relay is Asp127. UDP-alpha-D-glucose is bound by residues Ala343, Gln345, His360, Trp363, Asn364, Ser365, Glu368, Asp384, and Gln385.

The protein belongs to the UDP-glycosyltransferase family. Highly expressed in root. Expressed at lower level in kernel and cob. Weakly expressed in leaves. Weakly or not expressed in stems.

The enzyme catalyses cis-zeatin + UDP-alpha-D-glucose = O-beta-D-glucosyl-cis-zeatin + UDP + H(+). Functionally, utilizes UDP-glucose as the sugar donor and catalyzes the formation of O-beta-D-glucosyl-cis-zeatin from cis-zeatin. May regulate active versus storage forms of cytokinins and could have an impact on seed growth. The polypeptide is Cis-zeatin O-glucosyltransferase 1 (CISZOG1) (Zea mays (Maize)).